Here is a 301-residue protein sequence, read N- to C-terminus: Probable alpha-L-glutamate ligase (301 aa).

The 184-residue stretch at 104–287 (LQLLSRKGVG…IAGMVIDFIE (184 aa)) folds into the ATP-grasp domain. Residues K141, 178–179 (EY), D187, and 211–213 (RSN) contribute to the ATP site. 3 residues coordinate Mg(2+): D248, E260, and N262. Positions 248, 260, and 262 each coordinate Mn(2+).

Belongs to the RimK family. It depends on Mg(2+) as a cofactor. The cofactor is Mn(2+).

In Pseudoalteromonas translucida (strain TAC 125), this protein is Probable alpha-L-glutamate ligase.